We begin with the raw amino-acid sequence, 120 residues long: NAD(P)H-quinone oxidoreductase subunit 3, chloroplastic (120 aa).

A run of 3 helical transmembrane segments spans residues 9-29, 64-84, and 88-108; these read IFWAFLIISSAIPFLAFLISG, MFALVFVVFDVETVFLYPWAM, and VLGVSAFIEAFIFVLILILGL.

This sequence belongs to the complex I subunit 3 family. In terms of assembly, NDH is composed of at least 16 different subunits, 5 of which are encoded in the nucleus.

It is found in the plastid. The protein localises to the chloroplast thylakoid membrane. It carries out the reaction a plastoquinone + NADH + (n+1) H(+)(in) = a plastoquinol + NAD(+) + n H(+)(out). The enzyme catalyses a plastoquinone + NADPH + (n+1) H(+)(in) = a plastoquinol + NADP(+) + n H(+)(out). In terms of biological role, NDH shuttles electrons from NAD(P)H:plastoquinone, via FMN and iron-sulfur (Fe-S) centers, to quinones in the photosynthetic chain and possibly in a chloroplast respiratory chain. The immediate electron acceptor for the enzyme in this species is believed to be plastoquinone. Couples the redox reaction to proton translocation, and thus conserves the redox energy in a proton gradient. This chain is NAD(P)H-quinone oxidoreductase subunit 3, chloroplastic, found in Aethionema cordifolium (Lebanon stonecress).